A 204-amino-acid polypeptide reads, in one-letter code: Per os infectivity factor 3 (204 aa).

In terms of assembly, forms the PIF complex together with PIF1 and PIF2. The complex also interacts with per os infectivity factor PIF0.

Functionally, per os factor that plays a role in the initiation of host midgut infection. Unlike PIF1 and PIF2, PIF3 is not involved in specific binding of occluded virions (ODV) to the host midgut target cells. The protein is Per os infectivity factor 3 (AC115) of Lepidoptera (butterflies and moths).